A 451-amino-acid polypeptide reads, in one-letter code: Phosphoglucosamine mutase (451 aa).

The active-site Phosphoserine intermediate is the S107. Mg(2+)-binding residues include S107, D246, D248, and D250. S107 carries the phosphoserine modification.

This sequence belongs to the phosphohexose mutase family. Mg(2+) serves as cofactor. Activated by phosphorylation.

It catalyses the reaction alpha-D-glucosamine 1-phosphate = D-glucosamine 6-phosphate. Functionally, catalyzes the conversion of glucosamine-6-phosphate to glucosamine-1-phosphate. This is Phosphoglucosamine mutase from Burkholderia ambifaria (strain ATCC BAA-244 / DSM 16087 / CCUG 44356 / LMG 19182 / AMMD) (Burkholderia cepacia (strain AMMD)).